The following is a 291-amino-acid chain: Formamidopyrimidine-DNA glycosylase (291 aa).

P2 acts as the Schiff-base intermediate with DNA in catalysis. E3 functions as the Proton donor in the catalytic mechanism. Catalysis depends on K58, which acts as the Proton donor; for beta-elimination activity. DNA-binding residues include H100, R123, and K166. An FPG-type zinc finger spans residues 257 to 291 (SVYGREGKECFQCGIPITRISQSGRSSFYCSQCQK). R281 functions as the Proton donor; for delta-elimination activity in the catalytic mechanism.

The protein belongs to the FPG family. Monomer. It depends on Zn(2+) as a cofactor.

It carries out the reaction Hydrolysis of DNA containing ring-opened 7-methylguanine residues, releasing 2,6-diamino-4-hydroxy-5-(N-methyl)formamidopyrimidine.. The enzyme catalyses 2'-deoxyribonucleotide-(2'-deoxyribose 5'-phosphate)-2'-deoxyribonucleotide-DNA = a 3'-end 2'-deoxyribonucleotide-(2,3-dehydro-2,3-deoxyribose 5'-phosphate)-DNA + a 5'-end 5'-phospho-2'-deoxyribonucleoside-DNA + H(+). Its function is as follows. Involved in base excision repair of DNA damaged by oxidation or by mutagenic agents. Acts as a DNA glycosylase that recognizes and removes damaged bases. Has a preference for oxidized purines, such as 7,8-dihydro-8-oxoguanine (8-oxoG). Has AP (apurinic/apyrimidinic) lyase activity and introduces nicks in the DNA strand. Cleaves the DNA backbone by beta-delta elimination to generate a single-strand break at the site of the removed base with both 3'- and 5'-phosphates. This is Formamidopyrimidine-DNA glycosylase from Bartonella quintana (strain Toulouse) (Rochalimaea quintana).